The following is a 359-amino-acid chain: Olfactory receptor 5T2 (359 aa).

Topologically, residues 1 to 64 (MSYSIYKSTV…GFTDNLELQT (64 aa)) are extracellular. N44 carries N-linked (GlcNAc...) asparagine glycosylation. A helical membrane pass occupies residues 65 to 85 (IFFFLFLAIYLFTLMGNLGLI). The Cytoplasmic segment spans residues 86–93 (LVVIRDSQ). A helical membrane pass occupies residues 94 to 114 (LHKPMYYFLSMLSSVDACYSS). Residues 115 to 138 (VITPNMLVDFTTKNKVISFLGCVA) are Extracellular-facing. A helical transmembrane segment spans residues 139-159 (QVFLACSFGTTECFLLAAMAY). At 160 to 178 (DRYVAIYNPLLYSVSMSPR) the chain is on the cytoplasmic side. A helical transmembrane segment spans residues 179-199 (VYMPLINASYVAGILHATIHT). The Extracellular segment spans residues 200–235 (VATFSLSFCGANEIRRVFCDIPPLLAISYSDTHTNQ). Residues 236–256 (LLLFYFVGSIELVTILIVLIS) form a helical membrane-spanning segment. Over 257–276 (YGLILLAILKMYSAEGRRKV) the chain is Cytoplasmic. The chain crosses the membrane as a helical span at residues 277–297 (FSTCGAHLTGVSIYYGTILFM). Residues 298 to 310 (YVRPSSSYASDHD) lie on the Extracellular side of the membrane. The chain crosses the membrane as a helical span at residues 311–331 (MIVSIFYTIVIPLLNPVIYSL). The Cytoplasmic portion of the chain corresponds to 332 to 359 (RNKDVKDSMKKMFGKNQVINKVYFHTKK).

It belongs to the G-protein coupled receptor 1 family.

The protein resides in the cell membrane. Odorant receptor. The sequence is that of Olfactory receptor 5T2 (OR5T2) from Homo sapiens (Human).